The following is a 1586-amino-acid chain: Pentafunctional AROM polypeptide (1586 aa).

Residues 1 to 384 (MSEPTKISIL…HEPKASVVSN (384 aa)) form a 3-dehydroquinate synthase region. Residues 44–46 (DTN), 81–84 (ESSK), 114–116 (GGV), and aspartate 119 each bind NAD(+). A 7-phospho-2-dehydro-3-deoxy-D-arabino-heptonate-binding site is contributed by arginine 130. 139-140 (TT) serves as a coordination point for NAD(+). Positions 146 and 152 each coordinate 7-phospho-2-dehydro-3-deoxy-D-arabino-heptonate. Lysine 161 contributes to the NAD(+) binding site. Asparagine 162 is a 7-phospho-2-dehydro-3-deoxy-D-arabino-heptonate binding site. NAD(+)-binding positions include 179-182 (FLET) and asparagine 190. Glutamate 194 lines the Zn(2+) pocket. Residues 194 to 197 (EVIK) and lysine 250 contribute to the 7-phospho-2-dehydro-3-deoxy-D-arabino-heptonate site. Glutamate 260 (proton acceptor; for 3-dehydroquinate synthase activity) is an active-site residue. 7-phospho-2-dehydro-3-deoxy-D-arabino-heptonate contacts are provided by residues 264-268 (RNLLN) and histidine 271. Histidine 271 contacts Zn(2+). Histidine 275 serves as the catalytic Proton acceptor; for 3-dehydroquinate synthase activity. Residues histidine 287 and lysine 356 each coordinate 7-phospho-2-dehydro-3-deoxy-D-arabino-heptonate. Position 287 (histidine 287) interacts with Zn(2+). The EPSP synthase stretch occupies residues 397–842 (VHPGVPKSLN…WDALKQMFSV (446 aa)). Cysteine 824 serves as the catalytic For EPSP synthase activity. The tract at residues 864 to 1056 (SASVFIIGMR…KKKKHSFFVS (193 aa)) is shikimate kinase. 871-878 (GMRGAGKT) contacts ATP. Positions 1057–1277 (LTLPDVEPSG…AAPGQLSAAE (221 aa)) are 3-dehydroquinase. Residue histidine 1180 is the Proton acceptor; for 3-dehydroquinate dehydratase activity of the active site. The active-site Schiff-base intermediate with substrate; for 3-dehydroquinate dehydratase activity is lysine 1208. Positions 1290 to 1586 (AQKFAIFGSP…SKHLDYFLSF (297 aa)) are shikimate dehydrogenase.

This sequence in the N-terminal section; belongs to the sugar phosphate cyclases superfamily. Dehydroquinate synthase family. In the 2nd section; belongs to the EPSP synthase family. The protein in the 3rd section; belongs to the shikimate kinase family. It in the 4th section; belongs to the type-I 3-dehydroquinase family. This sequence in the C-terminal section; belongs to the shikimate dehydrogenase family. Homodimer. It depends on Zn(2+) as a cofactor.

Its subcellular location is the cytoplasm. The enzyme catalyses 7-phospho-2-dehydro-3-deoxy-D-arabino-heptonate = 3-dehydroquinate + phosphate. It carries out the reaction 3-dehydroquinate = 3-dehydroshikimate + H2O. It catalyses the reaction shikimate + NADP(+) = 3-dehydroshikimate + NADPH + H(+). The catalysed reaction is shikimate + ATP = 3-phosphoshikimate + ADP + H(+). The enzyme catalyses 3-phosphoshikimate + phosphoenolpyruvate = 5-O-(1-carboxyvinyl)-3-phosphoshikimate + phosphate. It functions in the pathway metabolic intermediate biosynthesis; chorismate biosynthesis; chorismate from D-erythrose 4-phosphate and phosphoenolpyruvate: step 2/7. It participates in metabolic intermediate biosynthesis; chorismate biosynthesis; chorismate from D-erythrose 4-phosphate and phosphoenolpyruvate: step 3/7. The protein operates within metabolic intermediate biosynthesis; chorismate biosynthesis; chorismate from D-erythrose 4-phosphate and phosphoenolpyruvate: step 4/7. Its pathway is metabolic intermediate biosynthesis; chorismate biosynthesis; chorismate from D-erythrose 4-phosphate and phosphoenolpyruvate: step 5/7. It functions in the pathway metabolic intermediate biosynthesis; chorismate biosynthesis; chorismate from D-erythrose 4-phosphate and phosphoenolpyruvate: step 6/7. In terms of biological role, the AROM polypeptide catalyzes 5 consecutive enzymatic reactions in prechorismate polyaromatic amino acid biosynthesis. The sequence is that of Pentafunctional AROM polypeptide from Penicillium rubens (strain ATCC 28089 / DSM 1075 / NRRL 1951 / Wisconsin 54-1255) (Penicillium chrysogenum).